The sequence spans 128 residues: MAVGTSALSKEPWWTLPENFHSPMVFHMEEDQEELIFGLDDTYLRCIELHSHTLIQLERCFTATGQTRVTVVGPPMAKQWLLLMFHCVGSQDSKCHARGLKMLERVRSQPLTNDDLVTSVSLPPYTGD.

The protein belongs to the KHDC1 family.

The chain is KHDC1-like protein (KHDC1L) from Homo sapiens (Human).